Reading from the N-terminus, the 69-residue chain is Putative membrane protein insertion efficiency factor (69 aa).

This sequence belongs to the UPF0161 family.

Its subcellular location is the cell membrane. Could be involved in insertion of integral membrane proteins into the membrane. In Clostridium botulinum (strain ATCC 19397 / Type A), this protein is Putative membrane protein insertion efficiency factor.